Consider the following 255-residue polypeptide: Methylthioribulose-1-phosphate dehydratase (255 aa).

Cys-111 serves as a coordination point for substrate. Residues His-128 and His-130 each coordinate Zn(2+). Glu-157 serves as the catalytic Proton donor/acceptor. Zn(2+) is bound at residue His-213.

Belongs to the aldolase class II family. MtnB subfamily. The cofactor is Zn(2+).

The protein resides in the cytoplasm. It carries out the reaction 5-(methylsulfanyl)-D-ribulose 1-phosphate = 5-methylsulfanyl-2,3-dioxopentyl phosphate + H2O. The protein operates within amino-acid biosynthesis; L-methionine biosynthesis via salvage pathway; L-methionine from S-methyl-5-thio-alpha-D-ribose 1-phosphate: step 2/6. Catalyzes the dehydration of methylthioribulose-1-phosphate (MTRu-1-P) into 2,3-diketo-5-methylthiopentyl-1-phosphate (DK-MTP-1-P). This is Methylthioribulose-1-phosphate dehydratase from Talaromyces stipitatus (strain ATCC 10500 / CBS 375.48 / QM 6759 / NRRL 1006) (Penicillium stipitatum).